The primary structure comprises 75 residues: Large ribosomal subunit protein bL28 (75 aa).

The protein belongs to the bacterial ribosomal protein bL28 family.

This Buchnera aphidicola subsp. Acyrthosiphon pisum (strain APS) (Acyrthosiphon pisum symbiotic bacterium) protein is Large ribosomal subunit protein bL28.